The following is a 133-amino-acid chain: MTDQLTQTPLYGERAIAEAELICFDNPRPGRPYEVSIELPEFTCKCPFSSYPDFAVLRLIYQPGPRVVELKAIKLYVNSYRDQSISHEEVTNRILDDLVAATDPVWMQLEADFNPRGNVHTVVRVSHGTRQPC.

Cys-46 functions as the Thioimide intermediate in the catalytic mechanism. Catalysis depends on Asp-53, which acts as the Proton donor. Substrate-binding positions include 68 to 70 and 87 to 88; these read VEL and HE.

It belongs to the GTP cyclohydrolase I family. QueF type 1 subfamily.

The protein localises to the cytoplasm. The catalysed reaction is 7-aminomethyl-7-carbaguanine + 2 NADP(+) = 7-cyano-7-deazaguanine + 2 NADPH + 3 H(+). Its pathway is tRNA modification; tRNA-queuosine biosynthesis. Functionally, catalyzes the NADPH-dependent reduction of 7-cyano-7-deazaguanine (preQ0) to 7-aminomethyl-7-deazaguanine (preQ1). This chain is NADPH-dependent 7-cyano-7-deazaguanine reductase, found in Parasynechococcus marenigrum (strain WH8102).